Reading from the N-terminus, the 274-residue chain is 2,3,4,5-tetrahydropyridine-2,6-dicarboxylate N-succinyltransferase (274 aa).

This sequence belongs to the transferase hexapeptide repeat family.

The protein localises to the cytoplasm. It catalyses the reaction (S)-2,3,4,5-tetrahydrodipicolinate + succinyl-CoA + H2O = (S)-2-succinylamino-6-oxoheptanedioate + CoA. It participates in amino-acid biosynthesis; L-lysine biosynthesis via DAP pathway; LL-2,6-diaminopimelate from (S)-tetrahydrodipicolinate (succinylase route): step 1/3. The protein is 2,3,4,5-tetrahydropyridine-2,6-dicarboxylate N-succinyltransferase of Delftia acidovorans (strain DSM 14801 / SPH-1).